The following is an 86-amino-acid chain: Acyl carrier protein (86 aa).

A Carrier domain is found at 10–85; it reads DKIEQKVIEM…DVIKYIKERQ (76 aa). Ser-45 bears the O-(pantetheine 4'-phosphoryl)serine mark.

It belongs to the acyl carrier protein (ACP) family. Post-translationally, 4'-phosphopantetheine is transferred from CoA to a specific serine of apo-ACP by AcpS. This modification is essential for activity because fatty acids are bound in thioester linkage to the sulfhydryl of the prosthetic group.

It localises to the cytoplasm. It functions in the pathway lipid metabolism; fatty acid biosynthesis. In terms of biological role, carrier of the growing fatty acid chain in fatty acid biosynthesis. This is Acyl carrier protein from Rickettsia prowazekii (strain Madrid E).